We begin with the raw amino-acid sequence, 602 residues long: MKPYKIENIRNFSIIAHIDHGKSTIADRLLESTSTIEQREMREQLLDSMDLERERGITIKAHPVTMTYEYEGETYELNLIDTPGHVDFSYEVSRSLAACEGALLIVDAAQGVQAQSLANVYLALERDLEIIPVLNKIDLPAAQPEAIKKQIEEFIGLDTSNAIACSAKTGQGIPEILESIIRLVPPPKPSQETELKALIFDSHYDPYVGIMVYVRVISGEIKKGDRITFMSTKGSSFEVLGIGAFLPEATLIEGSLRAGQVGYFIANLKKVKDVKIGDTVTTVKHPAKEPLEGFKEIKPVVFAGIYPIDSSDFDTLKDALGRLQLNDSALTIEQESSHSLGFGFRCGFLGLLHLEIIFERISREFDLDIIATAPSVIYKVVLKNGKTLFIDNPTAYPDPALIEHMEEPWVHVNIITPQEYLSNIMSLCMDKRGICLKTDMLDQHRLVLSYELPLNEIVSDFNDKLKSVTKGYGSFDYRLGDYKPGAIIKLEILINDETVDAFSCLVHRDKAESKGRSICEKLVDVIPPQLFKIPIQAAINKKIIARETIRALAKNVTAKCYGGDITRKRKLWEKQKKGKKRMKEFGKVSIPNTAFVEVLKME.

A tr-type G domain is found at 7–188 (ENIRNFSIIA…SIIRLVPPPK (182 aa)). GTP contacts are provided by residues 19–24 (DHGKST) and 135–138 (NKID).

Belongs to the TRAFAC class translation factor GTPase superfamily. Classic translation factor GTPase family. LepA subfamily.

Its subcellular location is the cell inner membrane. The catalysed reaction is GTP + H2O = GDP + phosphate + H(+). Required for accurate and efficient protein synthesis under certain stress conditions. May act as a fidelity factor of the translation reaction, by catalyzing a one-codon backward translocation of tRNAs on improperly translocated ribosomes. Back-translocation proceeds from a post-translocation (POST) complex to a pre-translocation (PRE) complex, thus giving elongation factor G a second chance to translocate the tRNAs correctly. Binds to ribosomes in a GTP-dependent manner. The sequence is that of Elongation factor 4 from Chlamydia muridarum (strain MoPn / Nigg).